A 359-amino-acid chain; its full sequence is Protein-glutamate methylesterase/protein-glutamine glutaminase 1 (359 aa).

In terms of domain architecture, Response regulatory spans 4–121 (SVLIVDDSAV…RAFLLEAAKE (118 aa)). Residue D55 is modified to 4-aspartylphosphate. Positions 169–354 (YRTTEKIIAI…MSLERIAHML (186 aa)) constitute a CheB-type methylesterase domain. Residues S181, H207, and D303 contribute to the active site.

This sequence belongs to the CheB family. Post-translationally, phosphorylated by CheA. Phosphorylation of the N-terminal regulatory domain activates the methylesterase activity.

The protein resides in the cytoplasm. The enzyme catalyses [protein]-L-glutamate 5-O-methyl ester + H2O = L-glutamyl-[protein] + methanol + H(+). It catalyses the reaction L-glutaminyl-[protein] + H2O = L-glutamyl-[protein] + NH4(+). Involved in chemotaxis. Part of a chemotaxis signal transduction system that modulates chemotaxis in response to various stimuli. Catalyzes the demethylation of specific methylglutamate residues introduced into the chemoreceptors (methyl-accepting chemotaxis proteins or MCP) by CheR. Also mediates the irreversible deamidation of specific glutamine residues to glutamic acid. This Chromobacterium violaceum (strain ATCC 12472 / DSM 30191 / JCM 1249 / CCUG 213 / NBRC 12614 / NCIMB 9131 / NCTC 9757 / MK) protein is Protein-glutamate methylesterase/protein-glutamine glutaminase 1.